Reading from the N-terminus, the 461-residue chain is Glycine--tRNA ligase (461 aa).

Substrate is bound by residues Arg100 and Glu163. ATP contacts are provided by residues 195 to 197 (RNE), 205 to 210 (FRTREF), 282 to 283 (EL), and 326 to 329 (GLGR). 210 to 214 (FEQME) is a binding site for substrate. 322-326 (EPAAG) is a substrate binding site.

Belongs to the class-II aminoacyl-tRNA synthetase family. As to quaternary structure, homodimer.

The protein resides in the cytoplasm. It catalyses the reaction tRNA(Gly) + glycine + ATP = glycyl-tRNA(Gly) + AMP + diphosphate. In terms of biological role, catalyzes the attachment of glycine to tRNA(Gly). The protein is Glycine--tRNA ligase of Corynebacterium efficiens (strain DSM 44549 / YS-314 / AJ 12310 / JCM 11189 / NBRC 100395).